We begin with the raw amino-acid sequence, 76 residues long: Putative defensin-like protein 184 (76 aa).

The first 21 residues, 1–21 (MKNSSILFVLIIVVFLISSSG), serve as a signal peptide directing secretion. Intrachain disulfides connect Cys-32/Cys-76, Cys-38/Cys-58, Cys-44/Cys-70, and Cys-48/Cys-72.

Belongs to the DEFL family.

The protein resides in the secreted. The sequence is that of Putative defensin-like protein 184 (LCR18) from Arabidopsis thaliana (Mouse-ear cress).